Reading from the N-terminus, the 336-residue chain is Glycerol-3-phosphate dehydrogenase [NAD(P)+] (336 aa).

Positions 16, 17, 37, and 111 each coordinate NADPH. Residues K111, G140, and T142 each coordinate sn-glycerol 3-phosphate. A144 lines the NADPH pocket. Residues K196, D249, S259, R260, and N261 each contribute to the sn-glycerol 3-phosphate site. The active-site Proton acceptor is the K196. Position 260 (R260) interacts with NADPH. NADPH contacts are provided by V284 and E286.

This sequence belongs to the NAD-dependent glycerol-3-phosphate dehydrogenase family.

The protein resides in the cytoplasm. The catalysed reaction is sn-glycerol 3-phosphate + NAD(+) = dihydroxyacetone phosphate + NADH + H(+). It carries out the reaction sn-glycerol 3-phosphate + NADP(+) = dihydroxyacetone phosphate + NADPH + H(+). It functions in the pathway membrane lipid metabolism; glycerophospholipid metabolism. Functionally, catalyzes the reduction of the glycolytic intermediate dihydroxyacetone phosphate (DHAP) to sn-glycerol 3-phosphate (G3P), the key precursor for phospholipid synthesis. The protein is Glycerol-3-phosphate dehydrogenase [NAD(P)+] of Glaesserella parasuis serovar 5 (strain SH0165) (Haemophilus parasuis).